Here is a 384-residue protein sequence, read N- to C-terminus: 8-amino-7-oxononanoate synthase (384 aa).

Residue R21 coordinates substrate. Residue 108–109 (GF) participates in pyridoxal 5'-phosphate binding. H133 is a substrate binding site. Pyridoxal 5'-phosphate contacts are provided by S179, H207, and T233. K236 is modified (N6-(pyridoxal phosphate)lysine). T352 contacts substrate.

This sequence belongs to the class-II pyridoxal-phosphate-dependent aminotransferase family. BioF subfamily. In terms of assembly, homodimer. Requires pyridoxal 5'-phosphate as cofactor.

It carries out the reaction 6-carboxyhexanoyl-[ACP] + L-alanine + H(+) = (8S)-8-amino-7-oxononanoate + holo-[ACP] + CO2. Its pathway is cofactor biosynthesis; biotin biosynthesis. Functionally, catalyzes the decarboxylative condensation of pimeloyl-[acyl-carrier protein] and L-alanine to produce 8-amino-7-oxononanoate (AON), [acyl-carrier protein], and carbon dioxide. This Citrobacter koseri (strain ATCC BAA-895 / CDC 4225-83 / SGSC4696) protein is 8-amino-7-oxononanoate synthase.